The primary structure comprises 196 residues: DNA replication complex GINS protein PSF1 (196 aa).

Belongs to the GINS1/PSF1 family. Component of the GINS complex which is a heterotetramer of gins1/psf1, gins2/psf2, gins3/psf3 and gins4/sld5. Component of the CMG helicase complex, composed of the mcm2-7 complex, the GINS complex and cdc45.

It is found in the nucleus. The protein localises to the chromosome. In terms of biological role, required for correct functioning of the GINS complex, a complex that plays an essential role in the initiation of DNA replication, and progression of DNA replication forks. GINS complex is a core component of CDC45-MCM-GINS (CMG) helicase, the molecular machine that unwinds template DNA during replication, and around which the replisome is built. This Xenopus laevis (African clawed frog) protein is DNA replication complex GINS protein PSF1.